Reading from the N-terminus, the 20-residue chain is MKCNECNRVQLKEGSVSLTL.

The protein is Tetracycline resistance leader peptide (tetL) of Bacillus cereus.